A 445-amino-acid chain; its full sequence is rRNA methyltransferase 3B, mitochondrial (445 aa).

The N-terminal 37 residues, 1-37 (MATRIASMRFRCALFQSALTLGRNEVNIKRYVRRRRA), are a transit peptide targeting the mitochondrion. Disordered regions lie at residues 52–90 (EGVISQTSERSSQHNNDITRNTDKSSIENPVSPNNSQPV) and 311–334 (HSTTMGKHNDNTTPQKHRRPSDYG). 3 stretches are compositionally biased toward polar residues: residues 54–70 (VISQTSERSSQHNNDIT), 78–90 (IENPVSPNNSQPV), and 311–324 (HSTTMGKHNDNTTP). Residues Gly387, Ile411, and Leu420 each coordinate S-adenosyl-L-methionine.

Belongs to the class IV-like SAM-binding methyltransferase superfamily. RNA methyltransferase TrmH family.

The protein localises to the mitochondrion. The catalysed reaction is a uridine in rRNA + S-adenosyl-L-methionine = a 2'-O-methyluridine in rRNA + S-adenosyl-L-homocysteine + H(+). Functionally, S-adenosyl-L-methionine-dependent 2'-O-ribose methyltransferase that catalyzes the formation of 2'-O-methylguanosine at position 1485 (Gm1485) in the mitochondrial large subunit ribosomal RNA (mtLSU rRNA), a conserved modification in the peptidyl transferase domain of the mtLSU rRNA. Also required for formation of 2'-O-methyluridine at position 1484 (Um1484) mediated by MRM2. This chain is rRNA methyltransferase 3B, mitochondrial, found in Danio rerio (Zebrafish).